Consider the following 157-residue polypeptide: Arginine repressor (157 aa).

The protein belongs to the ArgR family.

Its subcellular location is the cytoplasm. It functions in the pathway amino-acid biosynthesis; L-arginine biosynthesis [regulation]. In terms of biological role, regulates arginine biosynthesis genes. This is Arginine repressor from Lactobacillus delbrueckii subsp. bulgaricus (strain ATCC 11842 / DSM 20081 / BCRC 10696 / JCM 1002 / NBRC 13953 / NCIMB 11778 / NCTC 12712 / WDCM 00102 / Lb 14).